Reading from the N-terminus, the 373-residue chain is Chaperone protein DnaJ (373 aa).

The J domain maps to 5–69 (DYYEVLGVNK…NKRVNYDQFG (65 aa)). The CR-type zinc-finger motif lies at 130–212 (GTKKEISIKK…CKGKGTENKT (83 aa)). Residues Cys-143, Cys-146, Cys-160, Cys-163, Cys-186, Cys-189, Cys-200, and Cys-203 each coordinate Zn(2+). CXXCXGXG motif repeat units lie at residues 143–150 (CHTCNGDG), 160–167 (CSYCNGAG), 186–193 (CPKCEGSG), and 200–207 (CPTCKGKG).

The protein belongs to the DnaJ family. Homodimer. Zn(2+) serves as cofactor.

It localises to the cytoplasm. In terms of biological role, participates actively in the response to hyperosmotic and heat shock by preventing the aggregation of stress-denatured proteins and by disaggregating proteins, also in an autonomous, DnaK-independent fashion. Unfolded proteins bind initially to DnaJ; upon interaction with the DnaJ-bound protein, DnaK hydrolyzes its bound ATP, resulting in the formation of a stable complex. GrpE releases ADP from DnaK; ATP binding to DnaK triggers the release of the substrate protein, thus completing the reaction cycle. Several rounds of ATP-dependent interactions between DnaJ, DnaK and GrpE are required for fully efficient folding. Also involved, together with DnaK and GrpE, in the DNA replication of plasmids through activation of initiation proteins. The protein is Chaperone protein DnaJ of Staphylococcus epidermidis (strain ATCC 35984 / DSM 28319 / BCRC 17069 / CCUG 31568 / BM 3577 / RP62A).